The chain runs to 234 residues: uncharacterized protein (234 aa).

10 to 34 (VVTGASSGIGASIAETLANQGVKVV) provides a ligand contact to NADP(+). Residue S143 coordinates substrate. Residue Y156 is the Proton acceptor of the active site.

It belongs to the short-chain dehydrogenases/reductases (SDR) family.

This is an uncharacterized protein from Staphylococcus saprophyticus subsp. saprophyticus (strain ATCC 15305 / DSM 20229 / NCIMB 8711 / NCTC 7292 / S-41).